Consider the following 1134-residue polypeptide: Centrosomal protein of 131 kDa (1134 aa).

Disordered regions lie at residues 111 to 131 (NSSE…EEGE), 168 to 208 (DLPG…PLTL), 286 to 306 (ESSK…APSS), 425 to 455 (VGKK…TINP), and 492 to 528 (DQKQ…EDSR). The span at 180 to 196 (MHADLDSSDCDNDKQEV) shows a compositional bias: basic and acidic residues. Residues 494-504 (KQYDGKHKPGL) show a composition bias toward basic and acidic residues. Residues 513 to 522 (NDTASQLSLK) are compositionally biased toward polar residues. Residues 732–1131 (LESQNQAWEH…AVIRQQRKDY (400 aa)) are a coiled coil.

This sequence belongs to the CEP131 family. In terms of tissue distribution, expressed in chordotonal (Ch) neuronal precursors. Expressed in ciliated cells, like sensory neurons and spermatids.

The protein localises to the cytoplasm. It is found in the cytoskeleton. The protein resides in the microtubule organizing center. Its subcellular location is the centrosome. It localises to the cilium basal body. The protein localises to the centriole. In terms of biological role, cilium-specific protein with a role in cilium/flagellum formation. May be involved in transport of components into the growing cilium. In germ cells and sensory neurons, plays a role with Cby in the building of the transition zone necessary for the formation of the ciliary cap and for the correct elongation of the axoneme. This chain is Centrosomal protein of 131 kDa, found in Drosophila melanogaster (Fruit fly).